The following is a 445-amino-acid chain: Probable glycine dehydrogenase (decarboxylating) subunit 1 (445 aa).

The protein belongs to the GcvP family. N-terminal subunit subfamily. The glycine cleavage system is composed of four proteins: P, T, L and H. In this organism, the P 'protein' is a heterodimer of two subunits.

The catalysed reaction is N(6)-[(R)-lipoyl]-L-lysyl-[glycine-cleavage complex H protein] + glycine + H(+) = N(6)-[(R)-S(8)-aminomethyldihydrolipoyl]-L-lysyl-[glycine-cleavage complex H protein] + CO2. The glycine cleavage system catalyzes the degradation of glycine. The P protein binds the alpha-amino group of glycine through its pyridoxal phosphate cofactor; CO(2) is released and the remaining methylamine moiety is then transferred to the lipoamide cofactor of the H protein. This Chlorobium chlorochromatii (strain CaD3) protein is Probable glycine dehydrogenase (decarboxylating) subunit 1.